The primary structure comprises 354 residues: Uroporphyrinogen decarboxylase (354 aa).

Residues 27–31, phenylalanine 46, aspartate 77, tyrosine 154, threonine 209, and histidine 327 each bind substrate; that span reads RQAGR.

The protein belongs to the uroporphyrinogen decarboxylase family. Homodimer.

It is found in the cytoplasm. The enzyme catalyses uroporphyrinogen III + 4 H(+) = coproporphyrinogen III + 4 CO2. Its pathway is porphyrin-containing compound metabolism; protoporphyrin-IX biosynthesis; coproporphyrinogen-III from 5-aminolevulinate: step 4/4. Functionally, catalyzes the decarboxylation of four acetate groups of uroporphyrinogen-III to yield coproporphyrinogen-III. The sequence is that of Uroporphyrinogen decarboxylase from Photorhabdus laumondii subsp. laumondii (strain DSM 15139 / CIP 105565 / TT01) (Photorhabdus luminescens subsp. laumondii).